The chain runs to 168 residues: HTH-type transcriptional regulator IscR (168 aa).

One can recognise an HTH rrf2-type domain in the interval 2–131 (KLTSKGRYAV…NNITLGELMS (130 aa)). The segment at residues 28–51 (LADISERQGISLSYLEQLFSKLRK) is a DNA-binding region (H-T-H motif). Positions 92, 98, and 104 each coordinate [2Fe-2S] cluster.

[2Fe-2S] cluster serves as cofactor.

Functionally, regulates the transcription of several operons and genes involved in the biogenesis of Fe-S clusters and Fe-S-containing proteins. The protein is HTH-type transcriptional regulator IscR of Vibrio vulnificus (strain CMCP6).